The sequence spans 403 residues: Solanesyl-diphosphate synthase 2, chloroplastic (403 aa).

The transit peptide at 1–62 directs the protein to the chloroplast; it reads MLSVSCPRVY…QPGLAAVDVP (62 aa). 3 residues coordinate isopentenyl diphosphate: Lys123, Arg126, and His161. Residues Asp168 and Asp172 each coordinate Mg(2+). Position 177 (Arg177) interacts with an all-trans-polyprenyl diphosphate. Position 178 (Arg178) interacts with isopentenyl diphosphate. Residues Lys254, Thr255, Gln292, and Lys309 each contribute to the an all-trans-polyprenyl diphosphate site.

The protein belongs to the FPP/GGPP synthase family. In terms of assembly, homodimer. Interacts with FBN5. It depends on Mg(2+) as a cofactor. Expressed in leaves, stems and roots. Highest expression in leaves and roots.

The protein localises to the plastid. It localises to the chloroplast. It catalyses the reaction 7 isopentenyl diphosphate + (2E)-geranyl diphosphate = all-trans-nonaprenyl diphosphate + 7 diphosphate. Functionally, involved in providing solanesyl diphosphate for plastoquinone-9 (PQ-9) formation. Geranyl diphosphate is the preferred substrate. This Oryza sativa subsp. japonica (Rice) protein is Solanesyl-diphosphate synthase 2, chloroplastic.